Consider the following 63-residue polypeptide: Large ribosomal subunit protein uL29 (63 aa).

It belongs to the universal ribosomal protein uL29 family.

The chain is Large ribosomal subunit protein uL29 from Vibrio campbellii (strain ATCC BAA-1116).